The chain runs to 572 residues: Urease subunit alpha (572 aa).

Residues 134–572 enclose the Urease domain; sequence GGIDSHIHFI…LPLTQRYFLF (439 aa). His-139, His-141, and Lys-222 together coordinate Ni(2+). Lys-222 is subject to N6-carboxylysine. Position 224 (His-224) interacts with substrate. Residues His-251 and His-277 each contribute to the Ni(2+) site. His-325 acts as the Proton donor in catalysis. Ni(2+) is bound at residue Asp-365.

This sequence belongs to the metallo-dependent hydrolases superfamily. Urease alpha subunit family. Heterotrimer of UreA (gamma), UreB (beta) and UreC (alpha) subunits. Three heterotrimers associate to form the active enzyme. Ni cation serves as cofactor. Post-translationally, carboxylation allows a single lysine to coordinate two nickel ions.

The protein localises to the cytoplasm. The catalysed reaction is urea + 2 H2O + H(+) = hydrogencarbonate + 2 NH4(+). It functions in the pathway nitrogen metabolism; urea degradation; CO(2) and NH(3) from urea (urease route): step 1/1. This Variovorax paradoxus (strain S110) protein is Urease subunit alpha.